We begin with the raw amino-acid sequence, 345 residues long: MEIDPNYVNPKYSSLKSTVMNSEVLTSKYKSAIHHAGDGELEDDILAVMEELHSMLQEKGLACHTENLEVFSSTILHLKTTGQENRAGDLIAAILSFGCSISAQAIVPSTLLKTMSEMLDSFATRNHELKLITKDLQEVVPRQVLKAKKKSKAKSAEGPSASTEDIKDSDTKGNQDIGDNGDLNSSINQRNREICYKHYTTDEFEALSLEKRQEIMKYYIQYILGAWGYNATDPTKTAMLYDLIDKHTVITVMRQSKEGTLTSDDILMAIDEVIDSVNSMSSCYGGYKATIGNDNGTPYLVLIPKEGVILLSYPPPIPVTHHYYNKALSFIFPCAITIFSSPIYI.

Residues 148–185 (KKKSKAKSAEGPSASTEDIKDSDTKGNQDIGDNGDLNS) are disordered. Residues 164-173 (EDIKDSDTKG) show a composition bias toward basic and acidic residues.

The protein resides in the virion. This chain is Matrix protein (M2), found in Aphis (Hairy beggarticks).